A 353-amino-acid chain; its full sequence is (-)-beta-caryophyllene synthase ((2E,6E)-farnesyl diphosphate cyclizing) (353 aa).

Residues Asp85 and Asp89 each coordinate Mg(2+). Residues 85-89 carry the DDXXD motif motif; sequence DDQFD. Arg179 is a binding site for substrate. Mg(2+) is bound by residues Asn225 and Ser229. Substrate is bound at residue Lys232. Residue Glu233 participates in Mg(2+) binding. 320-321 is a substrate binding site; the sequence is RF.

The protein belongs to the terpene synthase family. It depends on Mg(2+) as a cofactor.

The catalysed reaction is (2E,6E)-farnesyl diphosphate = (-)-(E)-beta-caryophyllene + diphosphate. Its pathway is secondary metabolite biosynthesis; terpenoid biosynthesis. Its function is as follows. Catalyzes the conversion of (2E,6E)-farnesyl diphosphate (FPP) to yield the bicyclic sesquiterpene (2S,10R)-(-)-(E)-beta-caryophyllene via a probable 1,10-cyclization, which could involve the abstraction of the pyrophosphate from FPP to yield a (E,E)-germacradienyl cation. This chain is (-)-beta-caryophyllene synthase ((2E,6E)-farnesyl diphosphate cyclizing) (ptlA), found in Saccharothrix espanaensis (strain ATCC 51144 / DSM 44229 / JCM 9112 / NBRC 15066 / NRRL 15764).